Consider the following 315-residue polypeptide: MANLKEIRDRIKSVKNTRKITEAMRLVAAAKVRRAQDLVLRSRPFADRLARVLESLQSRIALESADTPLLQARDPRHITLVAMTGDRGLCGGFNANIIKRTEQRFAELKASGYEVALITVGRKVDTYFQNRNYPITASFTGLDQLPTSTDALQVSDAVQAEFLGGATDRVELIYTKFINLVSTKPVSQTLLPLDPQGIASPDDEIFRFVTKEGELGVERSSASNQEDKLKSDLVFEQSPSQLLDVLLPLYLQNQVLRSLQESAASELASRMTAMNNASDNAKALAKELTLDYNKARQAAITQEILEVVGGASAMA.

This sequence belongs to the ATPase gamma chain family. F-type ATPases have 2 components, CF(1) - the catalytic core - and CF(0) - the membrane proton channel. CF(1) has five subunits: alpha(3), beta(3), gamma(1), delta(1), epsilon(1). CF(0) has three main subunits: a, b and c.

Its subcellular location is the cellular thylakoid membrane. In terms of biological role, produces ATP from ADP in the presence of a proton gradient across the membrane. The gamma chain is believed to be important in regulating ATPase activity and the flow of protons through the CF(0) complex. The protein is ATP synthase gamma chain of Synechococcus sp. (strain RCC307).